The sequence spans 252 residues: Carbonic anhydrase (252 aa).

Positions 1–26 are cleaved as a signal peptide; the sequence is MPRFPRTLPRLTAVLLLACTAFSAAA. One can recognise an Alpha-carbonic anhydrase domain in the interval 31-252; that stretch reads THWGYTGHDS…QPLNARVVIE (222 aa). Cys54 and Cys207 are disulfide-bonded. The active-site Proton acceptor is His92. The Zn(2+) site is built by His118, His120, and His137. Residue 203 to 204 coordinates substrate; sequence TT.

This sequence belongs to the alpha-carbonic anhydrase family. In terms of assembly, homodimer. Zn(2+) serves as cofactor.

It localises to the periplasm. It catalyses the reaction hydrogencarbonate + H(+) = CO2 + H2O. Functionally, reversible hydration of carbon dioxide. The polypeptide is Carbonic anhydrase (cah) (Neisseria gonorrhoeae).